The following is a 187-amino-acid chain: Superoxide dismutase [Cu-Zn] (187 aa).

Positions 1–21 (MSLLPTGTLILLVLFILVLIT) are cleaved as a signal peptide. Cu cation-binding residues include histidine 76, histidine 78, and histidine 93. Cysteine 87 and cysteine 176 are disulfide-bonded. Positions 93, 101, 110, and 113 each coordinate Zn(2+). Histidine 150 lines the Cu cation pocket.

It belongs to the Cu-Zn superoxide dismutase family. Cu cation is required as a cofactor. Requires Zn(2+) as cofactor.

It carries out the reaction 2 superoxide + 2 H(+) = H2O2 + O2. Functionally, destroys radicals which are normally produced within the cells and which are toxic to biological systems. In Chlorella (PBCV-1), this protein is Superoxide dismutase [Cu-Zn].